We begin with the raw amino-acid sequence, 273 residues long: 4-diphosphocytidyl-2-C-methyl-D-erythritol kinase (273 aa).

K12 is an active-site residue. An ATP-binding site is contributed by 90–100; the sequence is PVASGIGGGSA. Residue D122 is part of the active site.

This sequence belongs to the GHMP kinase family. IspE subfamily.

It carries out the reaction 4-CDP-2-C-methyl-D-erythritol + ATP = 4-CDP-2-C-methyl-D-erythritol 2-phosphate + ADP + H(+). Its pathway is isoprenoid biosynthesis; isopentenyl diphosphate biosynthesis via DXP pathway; isopentenyl diphosphate from 1-deoxy-D-xylulose 5-phosphate: step 3/6. Functionally, catalyzes the phosphorylation of the position 2 hydroxy group of 4-diphosphocytidyl-2C-methyl-D-erythritol. In Paracoccus denitrificans (strain Pd 1222), this protein is 4-diphosphocytidyl-2-C-methyl-D-erythritol kinase.